The chain runs to 448 residues: MIKIRKGLDLPIAGAPRQAIEEGHQVRSVAVLGGDYVGMKPTMEVREGDVVKKGQLIFTDKKTEGVKYTSPAAGKVIAINRGHKRVLQSVVIEVADQEDEVTFASYSADQLRSLDRDAVQQQLVDSGEWTLLRTRPFGKVPAPGSTPNSVFVSILDTNPLALDPAVVIKENEQAFRHGLTVLSRLTDGPVWVCRGPNTDLPSFAGGQVREEAFSGKHPAGNVGTHIHYLDPVGLNKTVWSVGYQDVIAIGKLFTEGKISSARVVALTGPQAKTPRALRTRVGASVDDFAQGELKEGDNRLISGSVLNGHNARGPVAWLSRTTNQLTALREGHERELLGYISPGANRFSLMNIYLSKLMPGKRFNFTTTTNGSERAMVPVGAYEEVMPLDILPTQLLRALIVGDTDSATALGALELLEEDLSLCTFVCPGKYEYGPILRDNLTTIEAEG.

Belongs to the NqrA family. Composed of six subunits; NqrA, NqrB, NqrC, NqrD, NqrE and NqrF.

The enzyme catalyses a ubiquinone + n Na(+)(in) + NADH + H(+) = a ubiquinol + n Na(+)(out) + NAD(+). In terms of biological role, NQR complex catalyzes the reduction of ubiquinone-1 to ubiquinol by two successive reactions, coupled with the transport of Na(+) ions from the cytoplasm to the periplasm. NqrA to NqrE are probably involved in the second step, the conversion of ubisemiquinone to ubiquinol. In Alcanivorax borkumensis (strain ATCC 700651 / DSM 11573 / NCIMB 13689 / SK2), this protein is Na(+)-translocating NADH-quinone reductase subunit A.